Here is a 464-residue protein sequence, read N- to C-terminus: NADH dehydrogenase [ubiquinone] flavoprotein 1, mitochondrial (464 aa).

The transit peptide at 1–20 directs the protein to the mitochondrion; sequence MLAARRLLGGSLPSRVSVRF. Lysine 81 carries the post-translational modification N6-acetyllysine; alternate. Lysine 81 bears the N6-succinyllysine; alternate mark. 87–96 serves as a coordination point for NADH; the sequence is GRGGAGFPTG. The residue at position 104 (lysine 104) is an N6-acetyllysine. 199–247 provides a ligand contact to FMN; sequence RGAGAYICGEETALIESIEGKQGKPRLKPPFPADVGVFGCPTTVANVET. Position 257 is an omega-N-methylarginine (arginine 257). Lysine 375 is subject to N6-acetyllysine. 4 residues coordinate [4Fe-4S] cluster: cysteine 379, cysteine 382, cysteine 385, and cysteine 425.

The protein belongs to the complex I 51 kDa subunit family. As to quaternary structure, core subunit of respiratory chain NADH dehydrogenase (Complex I) which is composed of 45 different subunits. This is a component of the flavoprotein-sulfur (FP) fragment of the enzyme. Interacts with RAB5IF. FMN serves as cofactor. [4Fe-4S] cluster is required as a cofactor.

Its subcellular location is the mitochondrion inner membrane. It carries out the reaction a ubiquinone + NADH + 5 H(+)(in) = a ubiquinol + NAD(+) + 4 H(+)(out). Core subunit of the mitochondrial membrane respiratory chain NADH dehydrogenase (Complex I) which catalyzes electron transfer from NADH through the respiratory chain, using ubiquinone as an electron acceptor. Part of the peripheral arm of the enzyme, where the electrons from NADH are accepted by flavin mononucleotide (FMN) and then passed along a chain of iron-sulfur clusters by electron tunnelling to the final acceptor ubiquinone. Contains FMN, which is the initial electron acceptor as well as one iron-sulfur cluster. The sequence is that of NADH dehydrogenase [ubiquinone] flavoprotein 1, mitochondrial from Macaca fascicularis (Crab-eating macaque).